The primary structure comprises 275 residues: Lysosome-associated membrane glycoprotein 5 (275 aa).

The signal sequence occupies residues 1 to 18 (MEFQLLLLCSVWALGVCA). The Extracellular segment spans residues 19 to 228 (EQEVENLSGL…VTDQREQLEQ (210 aa)). N-linked (GlcNAc...) asparagine glycosylation is found at Asn-24 and Asn-42. Residues 229 to 249 (TLPLVLGLILGLIIVITISVY) form a helical membrane-spanning segment. Topologically, residues 250–275 (HFHLKLNAAHTQQPTLPRDRSLYKNM) are cytoplasmic.

The protein belongs to the LAMP family. In terms of processing, glycosylated.

The protein resides in the cytoplasmic vesicle membrane. It localises to the cell membrane. It is found in the cell projection. Its subcellular location is the dendrite. The protein localises to the cytoplasmic vesicle. The protein resides in the secretory vesicle. It localises to the synaptic vesicle membrane. It is found in the growth cone membrane. Its subcellular location is the early endosome membrane. The protein localises to the recycling endosome. The protein resides in the endoplasmic reticulum-Golgi intermediate compartment membrane. It localises to the endosome membrane. Functionally, plays a role in short-term synaptic plasticity in a subset of GABAergic neurons in the brain. In Danio rerio (Zebrafish), this protein is Lysosome-associated membrane glycoprotein 5 (lamp5).